The primary structure comprises 51 residues: ATP synthase protein 8 (51 aa).

The chain crosses the membrane as a helical span at residues L7–L27.

It belongs to the ATPase protein 8 family. As to quaternary structure, F-type ATPases have 2 components, CF(1) - the catalytic core - and CF(0) - the membrane proton channel.

It localises to the mitochondrion membrane. Its function is as follows. Mitochondrial membrane ATP synthase (F(1)F(0) ATP synthase or Complex V) produces ATP from ADP in the presence of a proton gradient across the membrane which is generated by electron transport complexes of the respiratory chain. F-type ATPases consist of two structural domains, F(1) - containing the extramembraneous catalytic core and F(0) - containing the membrane proton channel, linked together by a central stalk and a peripheral stalk. During catalysis, ATP synthesis in the catalytic domain of F(1) is coupled via a rotary mechanism of the central stalk subunits to proton translocation. Part of the complex F(0) domain. Minor subunit located with subunit a in the membrane. This chain is ATP synthase protein 8 (MT-ATP8), found in Limulus polyphemus (Atlantic horseshoe crab).